The following is a 328-amino-acid chain: DNA-directed RNA polymerase subunit alpha (328 aa).

The interval 1 to 230 (MSNHGLQMPE…DHVSFFIQLE (230 aa)) is alpha N-terminal domain (alpha-NTD). Residues 248–328 (RIRELLAQPV…EEYLEEKKAS (81 aa)) form an alpha C-terminal domain (alpha-CTD) region.

Belongs to the RNA polymerase alpha chain family. In terms of assembly, homodimer. The RNAP catalytic core consists of 2 alpha, 1 beta, 1 beta' and 1 omega subunit. When a sigma factor is associated with the core the holoenzyme is formed, which can initiate transcription.

It carries out the reaction RNA(n) + a ribonucleoside 5'-triphosphate = RNA(n+1) + diphosphate. DNA-dependent RNA polymerase catalyzes the transcription of DNA into RNA using the four ribonucleoside triphosphates as substrates. This chain is DNA-directed RNA polymerase subunit alpha, found in Salinibacter ruber (strain DSM 13855 / M31).